Reading from the N-terminus, the 666-residue chain is MSDSHLTAFDKASKAGFIIALGIVYGDIGTSPLYTMQSLVENQGGVNQVSESFILGSISLIIWTLTLITTIKYVLIALKADNHHEGGIFSLFTLVRKMSPWLIIPAMIGGATLLSDGALTPAVTVTSAIEGLKAVPGLSHIYQNQTNVIITTLVILIVLFGIQRFGTGFIGKIFGPVMFIWFSFLGVSGFFNTLGHLEIFKAINPYYALHLLFSPENHRGIFILGSIFLATTGAEALYSDLGHVGRGNIYVSWPFVKMCIVLSYCGQAAWILANKHSGIELNPFFASVPSQLTVYVVILATLAAIIASQALISGSFTLVSEAMRLKIFPLFRVTYPGANLGQLYIPVINWILFAVTSCTVLYFRTSAHMEAAYGLAITITMLMTTILLNYYLIKEGVKPFLAHLVMTFFALVEFIFFWASAVKFMHGGYVVVILALAIVFVMFIWHAGTRIVFKYVKSLNLNDYKEQIKQLRDDVCFDLYQTNVVYLSNRMQDYMIDRSILYSILDKRPKRARVYWFVNVQVTDEPYTAKYKVDMMGTDYMVRVELYLGFRMPQAVPRYLRTIVHDLMESGRLPKQEQEYTITPGRDVGDFRFVLIEERVSNARQLSNFERFIMQTKASIKHVTASPMRWFGLQYSEVTLEVVPLILSDVLKLPIKELVPVEDSEA.

12 helical membrane passes run 16–36 (GFII…LYTM), 58–78 (ISLI…LIAL), 100–120 (PWLI…GALT), 141–161 (IYQN…VLFG), 165–185 (FGTG…FSFL), 221–241 (IFIL…YSDL), 253–273 (WPFV…WILA), 292–312 (LTVY…QALI), 343–363 (LYIP…VLYF), 373–393 (YGLA…YYLI), 399–419 (PFLA…FFWA), and 424–444 (FMHG…VMFI).

Belongs to the HAK/KUP transporter (TC 2.A.72) family.

It is found in the cell membrane. The enzyme catalyses K(+)(in) + H(+)(in) = K(+)(out) + H(+)(out). In terms of biological role, transport of potassium into the cell. Likely operates as a K(+):H(+) symporter. This Streptococcus pyogenes serotype M18 (strain MGAS8232) protein is Probable potassium transport system protein Kup.